The chain runs to 293 residues: ATP synthase gamma chain (293 aa).

Belongs to the ATPase gamma chain family. In terms of assembly, F-type ATPases have 2 components, CF(1) - the catalytic core - and CF(0) - the membrane proton channel. CF(1) has five subunits: alpha(3), beta(3), gamma(1), delta(1), epsilon(1). CF(0) has three main subunits: a, b and c.

Its subcellular location is the cell inner membrane. Functionally, produces ATP from ADP in the presence of a proton gradient across the membrane. The gamma chain is believed to be important in regulating ATPase activity and the flow of protons through the CF(0) complex. In Leptothrix cholodnii (strain ATCC 51168 / LMG 8142 / SP-6) (Leptothrix discophora (strain SP-6)), this protein is ATP synthase gamma chain.